The sequence spans 474 residues: MKTRTSRLFRLSALAAGLCLAQAALAADPGAAPSYQALPAGNLCPAAAYDSRYNTKYLGFFTHLVQAQDDWLFRTTYDLRTDFGTSAEGWRELRALRDELKRKGIELVVVYQPTRGLVNREKLSPAEKAGFDYELAKKNYLATIARFRQAGIWTPDFSPLFDEKEEHAYYFKGDHHWTPHGARRSAKIVAETLKQVPGFEEIPKKQFESKRVGLLSKLGTFHKAAAQLCGNSYATQYVDRFETEPVGASDSGDLFGDGGNPQIALVGTSNSGPAYNFAGFLEEFSGADILNNAVSGGGFDSSLLAYMTSEEFHKNPPKILIWEFATHYDMAQKSFYRQAMPLVDNGCSGRKTVLSRKVKLRQGRNEVLLNSAALPIRSGSYVADVTYSDPSVHELKNTIWYMNGRREQLKIEQSKAVDTGGRYVFQLRNDSDWADQQFLSLEIEAPEDMPQGLEVQASICQAAPAKASQSVAGR.

Positions 1-26 (MKTRTSRLFRLSALAAGLCLAQAALA) are cleaved as a signal peptide. The interval 27–347 (ADPGAAPSYQ…QAMPLVDNGC (321 aa)) is SGNH hydrolase-like domain. Cysteines 44 and 229 form a disulfide. Residue Asp-174 is part of the active site. His-176 acts as the Proton acceptor in catalysis. Residue Ser-269 is the Nucleophile of the active site. A disulfide bridge connects residues Cys-347 and Cys-460. The tract at residues 348–474 (SGRKTVLSRK…AKASQSVAGR (127 aa)) is CBM domain.

This sequence belongs to the AlgX family. As to quaternary structure, monomer. Interacts with AlgK and MucD.

The protein localises to the periplasm. Its pathway is glycan biosynthesis; alginate biosynthesis. Its function is as follows. Plays two roles in the biosynthesis of the exopolysaccharide alginate: protects alginate from degradation as the polymer traverses the periplasm, and also plays a role in its O-acetylation. Acetylation of alginate causes the cells in the biofilm to adhere better to lung epithelium, form microcolonies, and resist the effects of the host immune system and/or antibiotics. Displays a low acetylesterase activity in vitro using a pseudosubstrate, 3-carboxyumbelliferyl acetate. Probably has acetyltransferase activity in vivo. The polypeptide is Alginate biosynthesis protein AlgX (algX) (Pseudomonas aeruginosa (strain ATCC 15692 / DSM 22644 / CIP 104116 / JCM 14847 / LMG 12228 / 1C / PRS 101 / PAO1)).